A 286-amino-acid polypeptide reads, in one-letter code: ATP synthase gamma chain (286 aa).

Belongs to the ATPase gamma chain family. F-type ATPases have 2 components, CF(1) - the catalytic core - and CF(0) - the membrane proton channel. CF(1) has five subunits: alpha(3), beta(3), gamma(1), delta(1), epsilon(1). CF(0) has three main subunits: a, b and c.

It localises to the cell inner membrane. Functionally, produces ATP from ADP in the presence of a proton gradient across the membrane. The gamma chain is believed to be important in regulating ATPase activity and the flow of protons through the CF(0) complex. This Shewanella woodyi (strain ATCC 51908 / MS32) protein is ATP synthase gamma chain.